The primary structure comprises 500 residues: Zinc finger and BTB domain-containing protein 34 (500 aa).

Positions 32 to 96 (CDIIVHIQGQ…CYTGRMSLQL (65 aa)) constitute a BTB domain. S164 carries the phosphoserine modification. The segment at 164–209 (SPPYCSQGRQPTASSDLRMETTPSKALRSRLQEEGHSDRGSSGSVS) is disordered. Residues 193-202 (RLQEEGHSDR) are compositionally biased toward basic and acidic residues. Glycyl lysine isopeptide (Lys-Gly) (interchain with G-Cter in SUMO2) cross-links involve residues K235 and K237. Over residues 236–245 (VKMEKSDRPS) the composition is skewed to basic and acidic residues. Disordered stretches follow at residues 236-256 (VKMEKSDRPSCSDSSSLGDDG) and 341-360 (SDSEAMMNNPGYESSPRERS). 2 C2H2-type zinc fingers span residues 372–394 (LICIYCGKSFNQKGSLDRHMRLH) and 400–422 (FVCKFCGKKYTRKDQLEYHIRGH). K426 participates in a covalent cross-link: Glycyl lysine isopeptide (Lys-Gly) (interchain with G-Cter in SUMO2). The C2H2-type 3 zinc-finger motif lies at 428–451 (FRCEICGKCFPFQGTLNQHLRKNH). The residue at position 463 (S463) is a Phosphoserine. A Glycyl lysine isopeptide (Lys-Gly) (interchain with G-Cter in SUMO2) cross-link involves residue K474. The tract at residues 478–500 (DASASEMGLDSRMEIHTVSDAPD) is disordered.

As to expression, expressed in several tissues, including heart, brain, thymus, skeletal muscle, small intestine, testis, kidney, placenta, peripheral blood cells and adult and fetal liver.

The protein resides in the nucleus. In terms of biological role, may be a transcriptional repressor. This Homo sapiens (Human) protein is Zinc finger and BTB domain-containing protein 34 (ZBTB34).